The following is a 70-amino-acid chain: Putative membrane protein insertion efficiency factor (70 aa).

The protein belongs to the UPF0161 family.

The protein localises to the cell membrane. Could be involved in insertion of integral membrane proteins into the membrane. In Clostridium novyi (strain NT), this protein is Putative membrane protein insertion efficiency factor.